A 423-amino-acid chain; its full sequence is Methanol:N,N-dimethyl-4-nitrosoaniline oxidoreductase (423 aa).

The protein belongs to the iron-containing alcohol dehydrogenase family. Homodecamer. Requires Mg(2+) as cofactor. The cofactor is Zn(2+). NADPH is required as a cofactor.

The catalysed reaction is methanol + A = formaldehyde + AH2. Its function is as follows. Catalyzes the oxidation of methanol to yield formaldehyde. While the in vivo electron acceptor is not known, N,N-dimethyl-4-nitrosoaniline (NDMA) can serve this function in vitro and is reduced to 4-(hydroxylamino)-N,N-dimethylaniline. The sequence is that of Methanol:N,N-dimethyl-4-nitrosoaniline oxidoreductase (thcE) from Rhodococcus erythropolis (Arthrobacter picolinophilus).